The primary structure comprises 88 residues: Sec-independent protein translocase protein TatA (88 aa).

Residues 1–21 (MNLGPTEILLILVIVVLLFGA) traverse the membrane as a helical segment. The segment covering 46 to 56 (SNDDQRYEEQQ) has biased composition (basic and acidic residues). The segment at 46 to 88 (SNDDQRYEEQQQQRQIAAQAQQQVVNPVEIPQPQPTDIQRPQQ) is disordered. Low complexity predominate over residues 57 to 68 (QQRQIAAQAQQQ).

This sequence belongs to the TatA/E family. As to quaternary structure, the Tat system comprises two distinct complexes: a TatABC complex, containing multiple copies of TatA, TatB and TatC subunits, and a separate TatA complex, containing only TatA subunits. Substrates initially bind to the TatABC complex, which probably triggers association of the separate TatA complex to form the active translocon.

It localises to the cell membrane. Part of the twin-arginine translocation (Tat) system that transports large folded proteins containing a characteristic twin-arginine motif in their signal peptide across membranes. TatA could form the protein-conducting channel of the Tat system. In Corynebacterium diphtheriae (strain ATCC 700971 / NCTC 13129 / Biotype gravis), this protein is Sec-independent protein translocase protein TatA.